A 414-amino-acid polypeptide reads, in one-letter code: Esterase FrsA (414 aa).

The protein belongs to the FrsA family.

It carries out the reaction a carboxylic ester + H2O = an alcohol + a carboxylate + H(+). Catalyzes the hydrolysis of esters. This Escherichia fergusonii (strain ATCC 35469 / DSM 13698 / CCUG 18766 / IAM 14443 / JCM 21226 / LMG 7866 / NBRC 102419 / NCTC 12128 / CDC 0568-73) protein is Esterase FrsA.